We begin with the raw amino-acid sequence, 224 residues long: uncharacterized protein (224 aa).

The stretch at 108–137 (QLALDRAELNESIRATNENLALQYSKLQTE) forms a coiled coil.

This is an uncharacterized protein from Human picobirnavirus (strain Human/Thailand/Hy005102/-) (PBV).